The chain runs to 163 residues: Nucleotide-binding protein BA_1166 (163 aa).

It belongs to the YajQ family.

Nucleotide-binding protein. The protein is Nucleotide-binding protein BA_1166 of Bacillus anthracis.